A 154-amino-acid chain; its full sequence is 17.7 kDa class I heat shock protein (154 aa).

In terms of domain architecture, sHSP spans 40 to 154 (ETSAFANTRI…PDVKSIEISG (115 aa)).

This sequence belongs to the small heat shock protein (HSP20) family. In terms of assembly, forms oligomeric structures.

Its subcellular location is the cytoplasm. This chain is 17.7 kDa class I heat shock protein, found in Solanum peruvianum (Peruvian tomato).